Here is a 192-residue protein sequence, read N- to C-terminus: Pyruvate kinase (192 aa).

Substrate is bound at residue Arg41. K(+) is bound by residues Asn43, Ser45, Asp75, and Thr76. 43-46 (NFSH) contributes to the ATP binding site.

Belongs to the pyruvate kinase family. The cofactor is Mg(2+). Requires K(+) as cofactor.

The enzyme catalyses pyruvate + ATP = phosphoenolpyruvate + ADP + H(+). It functions in the pathway carbohydrate degradation; glycolysis; pyruvate from D-glyceraldehyde 3-phosphate: step 5/5. The chain is Pyruvate kinase (pyk) from Spiroplasma citri.